Consider the following 477-residue polypeptide: Glycogen synthase (477 aa).

Lys-15 provides a ligand contact to ADP-alpha-D-glucose.

Belongs to the glycosyltransferase 1 family. Bacterial/plant glycogen synthase subfamily.

It carries out the reaction [(1-&gt;4)-alpha-D-glucosyl](n) + ADP-alpha-D-glucose = [(1-&gt;4)-alpha-D-glucosyl](n+1) + ADP + H(+). It participates in glycan biosynthesis; glycogen biosynthesis. Its function is as follows. Synthesizes alpha-1,4-glucan chains using ADP-glucose. This chain is Glycogen synthase, found in Anaeromyxobacter dehalogenans (strain 2CP-1 / ATCC BAA-258).